The following is a 569-amino-acid chain: Dicarboxylate transporter 1, chloroplastic (569 aa).

Residues 1 to 93 (MASMALSLTS…VPSPAPVSAP (93 aa)) constitute a chloroplast transit peptide. Over residues 23–74 (SLKPLSKSQPSISLPSLRSNASKSPSLSHKHFLSPPSLLLPHKLKPISASSP) the composition is skewed to low complexity. The interval 23-93 (SLKPLSKSQP…VPSPAPVSAP (71 aa)) is disordered. Positions 75-90 (TNPPPPPAPVPSPAPV) are enriched in pro residues. The next 12 membrane-spanning stretches (helical) occupy residues 106–126 (PLLA…PEGV), 134–154 (LAIF…LGAV), 172–192 (AAFS…FFFA), 241–261 (AGGI…SNVG), 268–288 (LGAW…SMFL), 317–337 (AAFV…YVVY), 367–387 (IMAV…KLGV), 388–408 (DAVT…VVTW), 423–443 (WFAA…ITWF), 450–470 (VVGG…LLYF), 490–510 (FLSV…VLSF), and 543–563 (YGFL…GLWW).

It belongs to the SLC13A/DASS transporter (TC 2.A.47) family. DIT1 subfamily. As to quaternary structure, monomer. In terms of processing, the N-terminus is blocked. As to expression, expressed in leaves.

The protein localises to the plastid. It localises to the chloroplast inner membrane. Functionally, 2-oxoglutarate/malate translocator that transports carbon skeletons into chloroplasts for net glutamate synthesis. This translocator exchanges malate for internal succinate, fumarate and 2-oxoglutarate but not for aspartate and glutamate. Involved with DIT2 in primary ammonia assimilation and in the re-assimilation of ammonia generated by the photorespiratory pathway. Imports 2-oxoglutarate into plastids as precursor for ammonia assimilation. 2-oxoglutarate is converted to glutamate, the end product of ammonia assimilation, which is exported to the cytosol by DIT2. This is Dicarboxylate transporter 1, chloroplastic (DIT1) from Spinacia oleracea (Spinach).